Consider the following 312-residue polypeptide: Ribosomal RNA small subunit methyltransferase H (312 aa).

Residues 33–35, aspartate 51, phenylalanine 78, aspartate 97, and glutamine 104 each bind S-adenosyl-L-methionine; that span reads GGY.

It belongs to the methyltransferase superfamily. RsmH family.

It localises to the cytoplasm. The catalysed reaction is cytidine(1402) in 16S rRNA + S-adenosyl-L-methionine = N(4)-methylcytidine(1402) in 16S rRNA + S-adenosyl-L-homocysteine + H(+). Functionally, specifically methylates the N4 position of cytidine in position 1402 (C1402) of 16S rRNA. This is Ribosomal RNA small subunit methyltransferase H from Orientia tsutsugamushi (strain Ikeda) (Rickettsia tsutsugamushi).